Here is a 407-residue protein sequence, read N- to C-terminus: Probable succinyl-diaminopimelate desuccinylase (407 aa).

His72 contacts Zn(2+). Asp74 is a catalytic residue. Residue Asp105 participates in Zn(2+) binding. Glu139 (proton acceptor) is an active-site residue. Positions 140, 165, and 378 each coordinate Zn(2+).

This sequence belongs to the peptidase M20A family. It depends on Zn(2+) as a cofactor. Co(2+) serves as cofactor.

The enzyme catalyses N-succinyl-(2S,6S)-2,6-diaminopimelate + H2O = (2S,6S)-2,6-diaminopimelate + succinate. Its pathway is amino-acid biosynthesis; L-lysine biosynthesis via DAP pathway; LL-2,6-diaminopimelate from (S)-tetrahydrodipicolinate (succinylase route): step 3/3. The protein is Probable succinyl-diaminopimelate desuccinylase (dapE) of Staphylococcus aureus (strain N315).